The following is a 307-amino-acid chain: Small ribosomal subunit biogenesis GTPase RsgA (307 aa).

The region spanning 82-240 is the CP-type G domain; that stretch reads GRYGERIVVA…IADTPGLREV (159 aa). Residues 131–134 and 182–190 contribute to the GTP site; these read NKAD and GPSGVGKSS. Residues C264, C269, H271, and C277 each contribute to the Zn(2+) site.

Belongs to the TRAFAC class YlqF/YawG GTPase family. RsgA subfamily. As to quaternary structure, monomer. Associates with 30S ribosomal subunit, binds 16S rRNA. The cofactor is Zn(2+).

It localises to the cytoplasm. One of several proteins that assist in the late maturation steps of the functional core of the 30S ribosomal subunit. Helps release RbfA from mature subunits. May play a role in the assembly of ribosomal proteins into the subunit. Circularly permuted GTPase that catalyzes slow GTP hydrolysis, GTPase activity is stimulated by the 30S ribosomal subunit. In Gemmatimonas aurantiaca (strain DSM 14586 / JCM 11422 / NBRC 100505 / T-27), this protein is Small ribosomal subunit biogenesis GTPase RsgA.